Consider the following 178-residue polypeptide: Hypoxanthine phosphoribosyltransferase (178 aa).

2 residues coordinate diphosphate: Arg43 and Gly44. GMP is bound at residue Glu99. An IMP-binding site is contributed by Glu99. 2 residues coordinate Mg(2+): Glu99 and Asp100. Residue Asp103 is the Proton acceptor of the active site. GMP is bound by residues 103–108 (DSGNTL), Lys131, and Asp159. IMP contacts are provided by residues 103-108 (DSGNTL) and Lys131. Arg165 is a binding site for diphosphate.

This sequence belongs to the purine/pyrimidine phosphoribosyltransferase family. Homotetramer. The cofactor is Mg(2+).

It localises to the cytoplasm. It carries out the reaction IMP + diphosphate = hypoxanthine + 5-phospho-alpha-D-ribose 1-diphosphate. The catalysed reaction is GMP + diphosphate = guanine + 5-phospho-alpha-D-ribose 1-diphosphate. It participates in purine metabolism; IMP biosynthesis via salvage pathway; IMP from hypoxanthine: step 1/1. Purine salvage pathway enzyme which catalyzes the transfer of the ribosyl-5-phosphate group from 5-phospho-alpha-D-ribose 1-diphosphate (PRPP) to the N9 position of hypoxanthine to yield IMP (inosine 5'-monophosphate). To a lesser extent, can also act on guanine leading to GMP, but shows a highly less efficient activity with xanthine. In Salmonella typhimurium (strain LT2 / SGSC1412 / ATCC 700720), this protein is Hypoxanthine phosphoribosyltransferase (hpt).